A 66-amino-acid polypeptide reads, in one-letter code: Defensin-B1 (66 aa).

Positions 1 to 23 (MNAHVLLLCTILFLLVHTPPVLG) are cleaved as a signal peptide. 3 cysteine pairs are disulfide-bonded: cysteine 29–cysteine 56, cysteine 36–cysteine 50, and cysteine 40–cysteine 57. A propeptide spanning residues 61 to 66 (VLMEDG) is cleaved from the precursor.

Belongs to the beta-defensin family. Expressed at low levels in kidney, lung, and spleen.

It localises to the secreted. Functionally, has bactericidal activity. May act as a ligand for C-C chemokine receptor CCR6. Positively regulates the sperm motility and bactericidal activity in a CCR6-dependent manner. Binds to CCR6 and triggers Ca2+ mobilization in the sperm which is important for its motility. This chain is Defensin-B1, found in Ornithorhynchus anatinus (Duckbill platypus).